A 178-amino-acid chain; its full sequence is Signaling threshold-regulating transmembrane adapter 1 (178 aa).

The Extracellular portion of the chain corresponds to 1 to 23 (MSRENNCTTADLAWGIPSITQAW). Asparagine 6 is a glycosylation site (N-linked (GlcNAc...) asparagine). A helical; Signal-anchor for type III membrane protein transmembrane segment spans residues 24-44 (GLWALFGVVTMLLLISLAALL). The Cytoplasmic portion of the chain corresponds to 45-178 (SQWTRGRRRT…AYANSQPAPS (134 aa)). A phosphoserine mark is found at serine 62 and serine 65. Tyrosine 72 carries the post-translational modification Phosphotyrosine. The interaction with GRB2 stretch occupies residues 72–75 (YGNL). The interval 81 to 102 (GRLSEESRSEEQDPSSGGLARG) is disordered. 3 positions are modified to phosphoserine: serine 84, serine 87, and serine 89. Position 109 is a phosphotyrosine (tyrosine 109). Residue threonine 126 is modified to Phosphothreonine. The tract at residues 128–133 (IKYCEV) is interaction with PTPN11. Residues tyrosine 130 and tyrosine 151 each carry the phosphotyrosine modification. Positions 151 to 154 (YASV) are interaction with CSK. Serine 164 carries the phosphoserine modification. Residue tyrosine 170 is modified to Phosphotyrosine. Residues 170 to 173 (YANS) form an interaction with GRB2 region.

Homodimer; disulfide-linked. When phosphorylated, interacts with PTPN11/SHP2, GRB2 and CSK. Post-translationally, phosphorylated on tyrosines upon TCR activation; which promotes recruitment of PTPN11, GRB2 and CSK. Lymph node, spleen and thymus.

The protein resides in the cell membrane. Functionally, negatively regulates T-cell antigen receptor (TCR)-mediated signaling. Involved in positive selection of T-cells. The sequence is that of Signaling threshold-regulating transmembrane adapter 1 (Sit1) from Rattus norvegicus (Rat).